A 75-amino-acid chain; its full sequence is Exodeoxyribonuclease 7 small subunit (75 aa).

The protein belongs to the XseB family. In terms of assembly, heterooligomer composed of large and small subunits.

It localises to the cytoplasm. The enzyme catalyses Exonucleolytic cleavage in either 5'- to 3'- or 3'- to 5'-direction to yield nucleoside 5'-phosphates.. Functionally, bidirectionally degrades single-stranded DNA into large acid-insoluble oligonucleotides, which are then degraded further into small acid-soluble oligonucleotides. The protein is Exodeoxyribonuclease 7 small subunit of Chlamydia felis (strain Fe/C-56) (Chlamydophila felis).